The following is a 169-amino-acid chain: Peptide deformylase (169 aa).

2 residues coordinate Fe cation: cysteine 91 and histidine 133. The active site involves glutamate 134. Histidine 137 serves as a coordination point for Fe cation.

The protein belongs to the polypeptide deformylase family. Fe(2+) is required as a cofactor.

It carries out the reaction N-terminal N-formyl-L-methionyl-[peptide] + H2O = N-terminal L-methionyl-[peptide] + formate. Functionally, removes the formyl group from the N-terminal Met of newly synthesized proteins. Requires at least a dipeptide for an efficient rate of reaction. N-terminal L-methionine is a prerequisite for activity but the enzyme has broad specificity at other positions. The protein is Peptide deformylase of Escherichia coli (strain K12 / DH10B).